The sequence spans 451 residues: Tubulin alpha-3 chain (451 aa).

Glutamine 11 is a GTP binding site. Position 40 is an N6-acetyllysine (lysine 40). Positions 71, 140, 144, 145, 179, 206, and 228 each coordinate GTP. Glutamate 71 provides a ligand contact to Mg(2+). Glutamate 254 is a catalytic residue.

It belongs to the tubulin family. In terms of assembly, dimer of alpha and beta chains. A typical microtubule is a hollow water-filled tube with an outer diameter of 25 nm and an inner diameter of 15 nM. Alpha-beta heterodimers associate head-to-tail to form protofilaments running lengthwise along the microtubule wall with the beta-tubulin subunit facing the microtubule plus end conferring a structural polarity. Microtubules usually have 13 protofilaments but different protofilament numbers can be found in some organisms and specialized cells. Mg(2+) serves as cofactor. In terms of processing, undergoes a tyrosination/detyrosination cycle, the cyclic removal and re-addition of a C-terminal tyrosine residue by the enzymes tubulin tyrosine carboxypeptidase (TTCP) and tubulin tyrosine ligase (TTL), respectively. Acetylation of alpha chains at Lys-40 stabilizes microtubules and affects affinity and processivity of microtubule motors. This modification has a role in multiple cellular functions, ranging from cell motility, cell cycle progression or cell differentiation to intracellular trafficking and signaling.

It is found in the cytoplasm. Its subcellular location is the cytoskeleton. The catalysed reaction is GTP + H2O = GDP + phosphate + H(+). Tubulin is the major constituent of microtubules, a cylinder consisting of laterally associated linear protofilaments composed of alpha- and beta-tubulin heterodimers. Microtubules grow by the addition of GTP-tubulin dimers to the microtubule end, where a stabilizing cap forms. Below the cap, tubulin dimers are in GDP-bound state, owing to GTPase activity of alpha-tubulin. The sequence is that of Tubulin alpha-3 chain from Homarus americanus (American lobster).